The chain runs to 78 residues: Large ribosomal subunit protein bL28 (78 aa).

Positions 1 to 28 (MSAICQVTGRQPGYGKSVSHSHRRTSRR) are disordered.

The protein belongs to the bacterial ribosomal protein bL28 family.

This Corynebacterium diphtheriae (strain ATCC 700971 / NCTC 13129 / Biotype gravis) protein is Large ribosomal subunit protein bL28.